A 117-amino-acid polypeptide reads, in one-letter code: Large ribosomal subunit protein uL18 (117 aa).

The protein belongs to the universal ribosomal protein uL18 family. Part of the 50S ribosomal subunit; part of the 5S rRNA/L5/L18/L25 subcomplex. Contacts the 5S and 23S rRNAs.

This is one of the proteins that bind and probably mediate the attachment of the 5S RNA into the large ribosomal subunit, where it forms part of the central protuberance. The chain is Large ribosomal subunit protein uL18 from Phytoplasma australiense.